Here is a 362-residue protein sequence, read N- to C-terminus: Aminomethyltransferase (362 aa).

This sequence belongs to the GcvT family. As to quaternary structure, the glycine cleavage system is composed of four proteins: P, T, L and H.

The enzyme catalyses N(6)-[(R)-S(8)-aminomethyldihydrolipoyl]-L-lysyl-[protein] + (6S)-5,6,7,8-tetrahydrofolate = N(6)-[(R)-dihydrolipoyl]-L-lysyl-[protein] + (6R)-5,10-methylene-5,6,7,8-tetrahydrofolate + NH4(+). In terms of biological role, the glycine cleavage system catalyzes the degradation of glycine. In Chlorobium limicola (strain DSM 245 / NBRC 103803 / 6330), this protein is Aminomethyltransferase.